Reading from the N-terminus, the 354-residue chain is Serum paraoxonase/lactonase 3 (354 aa).

A disulfide bridge connects residues Cys42 and Cys352. The N-linked (GlcNAc...) asparagine glycan is linked to Asn50. Ca(2+) contacts are provided by Glu53 and Asp54. His114 functions as the Proton acceptor in the catalytic mechanism. Ile116 contributes to the Ca(2+) binding site. A Phosphoserine modification is found at Ser165. 5 residues coordinate Ca(2+): Asn167, Asn168, Asn223, Asp268, and Asn269. Asn269 carries an N-linked (GlcNAc...) asparagine glycan.

Belongs to the paraoxonase family. In terms of assembly, homodimer. The cofactor is Ca(2+). Glycosylated. Post-translationally, the signal sequence is not cleaved.

It localises to the secreted. The protein resides in the extracellular space. It carries out the reaction a phenyl acetate + H2O = a phenol + acetate + H(+). The enzyme catalyses An aryl dialkyl phosphate + H2O = dialkyl phosphate + an aryl alcohol.. It catalyses the reaction an N-acyl-L-homoserine lactone + H2O = an N-acyl-L-homoserine + H(+). In terms of biological role, has low activity towards the organophosphate paraxon and aromatic carboxylic acid esters. Rapidly hydrolyzes lactones such as statin prodrugs (e.g. lovastatin). Hydrolyzes aromatic lactones and 5- or 6-member ring lactones with aliphatic substituents but not simple lactones or those with polar substituents. This Oryctolagus cuniculus (Rabbit) protein is Serum paraoxonase/lactonase 3 (PON3).